Consider the following 207-residue polypeptide: HTH-type transcriptional regulator AqdR (207 aa).

Positions Ala16 to Glu76 constitute an HTH tetR-type domain. Residues Gly39–Trp58 constitute a DNA-binding region (H-T-H motif).

Functionally, may regulate the expression of genes involved in the degradation of the Pseudomonas aeruginosa quorum sensing signal molecules HHQ (2-heptyl-4-quinolone) and PQS (2-heptyl-3-hydroxy-4-quinolone). The protein is HTH-type transcriptional regulator AqdR of Rhodococcus erythropolis (Arthrobacter picolinophilus).